We begin with the raw amino-acid sequence, 317 residues long: Glutathione synthetase (317 aa).

The region spanning 126 to 311 (KFFATQFTQC…IGDKLMDAIA (186 aa)) is the ATP-grasp domain. 152–208 (AAEHRDIILKPLDGMGGSSIFRHREGDPNLSVILETLTQHGSQQIMAQRYLPEIKDG) contacts ATP. Glutamate 282 and asparagine 284 together coordinate Mg(2+).

Belongs to the prokaryotic GSH synthase family. It depends on Mg(2+) as a cofactor. Mn(2+) serves as cofactor.

The enzyme catalyses gamma-L-glutamyl-L-cysteine + glycine + ATP = glutathione + ADP + phosphate + H(+). It functions in the pathway sulfur metabolism; glutathione biosynthesis; glutathione from L-cysteine and L-glutamate: step 2/2. The polypeptide is Glutathione synthetase (Pseudomonas aeruginosa (strain ATCC 15692 / DSM 22644 / CIP 104116 / JCM 14847 / LMG 12228 / 1C / PRS 101 / PAO1)).